A 393-amino-acid chain; its full sequence is S-adenosylmethionine synthase 4 (393 aa).

Glu-9 contributes to the Mg(2+) binding site. His-15 provides a ligand contact to ATP. Glu-43 lines the K(+) pocket. Residues Glu-56 and Gln-99 each coordinate L-methionine. ATP is bound by residues 167–169, 235–238, Asp-246, 252–253, Ala-269, Lys-273, and Lys-277; these read DGK, SGRF, and RK. L-methionine is bound at residue Asp-246. Residue Lys-277 coordinates L-methionine.

The protein belongs to the AdoMet synthase family. As to quaternary structure, homotetramer. Mn(2+) is required as a cofactor. It depends on Mg(2+) as a cofactor. Requires Co(2+) as cofactor. K(+) serves as cofactor. In terms of tissue distribution, detected in trichomes (at the protein level).

Its subcellular location is the cytoplasm. It catalyses the reaction L-methionine + ATP + H2O = S-adenosyl-L-methionine + phosphate + diphosphate. It functions in the pathway amino-acid biosynthesis; S-adenosyl-L-methionine biosynthesis; S-adenosyl-L-methionine from L-methionine: step 1/1. In terms of biological role, catalyzes the formation of S-adenosylmethionine from methionine and ATP. The reaction comprises two steps that are both catalyzed by the same enzyme: formation of S-adenosylmethionine (AdoMet) and triphosphate, and subsequent hydrolysis of the triphosphate. In Arabidopsis thaliana (Mouse-ear cress), this protein is S-adenosylmethionine synthase 4 (METK4).